The following is a 212-amino-acid chain: RNA chaperone ProQ (212 aa).

The segment at 107–153 is disordered; the sequence is QDKAKAKRVAQAKSANPAAKTAKKPVKKPVAKRPKPAQSSKPAKEPV. Residues 117 to 126 show a composition bias toward low complexity; it reads QAKSANPAAK. The segment covering 127-141 has biased composition (basic residues); the sequence is TAKKPVKKPVAKRPK.

The protein belongs to the ProQ family.

The protein localises to the cytoplasm. In terms of biological role, RNA chaperone with significant RNA binding, RNA strand exchange and RNA duplexing activities. The polypeptide is RNA chaperone ProQ (Shewanella pealeana (strain ATCC 700345 / ANG-SQ1)).